The sequence spans 548 residues: Membrane protein insertase YidC (548 aa).

A helical membrane pass occupies residues 6–26 (NLLVIALLFVSFMIWQAWEQD). Residues 28–56 (NPQPQTQQTTQTTTTAAGSAADQGVPASG) form a disordered region. Over residues 29–42 (PQPQTQQTTQTTTT) the composition is skewed to low complexity. The next 4 helical transmembrane spans lie at 350–370 (FVGN…GIMY), 424–444 (FPLI…MGSI), 458–478 (LSAQ…MFFI), and 499–519 (PVIF…YYIV).

The protein belongs to the OXA1/ALB3/YidC family. Type 1 subfamily. In terms of assembly, interacts with the Sec translocase complex via SecD. Specifically interacts with transmembrane segments of nascent integral membrane proteins during membrane integration.

The protein resides in the cell inner membrane. Its function is as follows. Required for the insertion and/or proper folding and/or complex formation of integral membrane proteins into the membrane. Involved in integration of membrane proteins that insert both dependently and independently of the Sec translocase complex, as well as at least some lipoproteins. Aids folding of multispanning membrane proteins. The polypeptide is Membrane protein insertase YidC (Salmonella choleraesuis (strain SC-B67)).